The primary structure comprises 109 residues: MTNCIVELTDGIFKQYILESKKAVLVDFWAEWCNPCKILAPILEDIAKEYEHKLIVTKINIDKNPNTAPKYSIRGIPALLLFKNSELVGTKVGALSKVQLKDFLNLYLK.

The region spanning 2-109 (TNCIVELTDG…LKDFLNLYLK (108 aa)) is the Thioredoxin domain. Cysteine 33 and cysteine 36 are disulfide-bonded.

This sequence belongs to the thioredoxin family.

Participates in various redox reactions through the reversible oxidation of its active center dithiol to a disulfide and catalyzes dithiol-disulfide exchange reactions. This is Thioredoxin (trxA) from Buchnera aphidicola subsp. Baizongia pistaciae (strain Bp).